The chain runs to 527 residues: MSENIRVSEVSDILRQQLEGIETKVQLDEIGTVLQVSDGVVRIYGLRNAEANELLEFDNGIKAIVMNLEEDNVGAVLLGPTDKIKEGFTVKRTKRIASIRVGESMLGRVIDPLGEPLDGKGLIGGELYEMPLERKAPGVIYRQPVNQPLQTGLKAVDAMIPIGRGQRELIIGDRQTGKTSIAIDTIINQRSNYEAGDPVYCIYVAIGQKGSTVASIVNTLRQYGAMDYTIVVAATAGDPAALQYFAPFAGAAIGEYFRDTGRHALVVYDDLSKQAVSYREVSLILRRPSGREAYPGDIFYLHSRLLERAAKIINQEEVAREMNDLPESLKGKVKGGGSLTALPIIETQAGDVSAYIPTNVISITDGQIFLDTDLFNQGNRPAINVGISVSRVGGNAQIKAMKKVAGTLKIDQAQYRELEAFSKFSGDMDPVTALTIDKGQKNARLLVQPQYSPMPVEKQIAILYCGIHGLLRNVPLDKVEDFEAAFLNTLALDHQADVLDVLKTGVINDEVTKAIEETAAMVAKQYS.

Residue 172 to 179 (GDRQTGKT) participates in ATP binding.

It belongs to the ATPase alpha/beta chains family. F-type ATPases have 2 components, CF(1) - the catalytic core - and CF(0) - the membrane proton channel. CF(1) has five subunits: alpha(3), beta(3), gamma(1), delta(1), epsilon(1). CF(0) has three main subunits: a(1), b(2) and c(9-12). The alpha and beta chains form an alternating ring which encloses part of the gamma chain. CF(1) is attached to CF(0) by a central stalk formed by the gamma and epsilon chains, while a peripheral stalk is formed by the delta and b chains.

The protein resides in the cell inner membrane. The catalysed reaction is ATP + H2O + 4 H(+)(in) = ADP + phosphate + 5 H(+)(out). Its function is as follows. Produces ATP from ADP in the presence of a proton gradient across the membrane. The alpha chain is a regulatory subunit. This is ATP synthase subunit alpha from Bacteroides fragilis (strain ATCC 25285 / DSM 2151 / CCUG 4856 / JCM 11019 / LMG 10263 / NCTC 9343 / Onslow / VPI 2553 / EN-2).